Consider the following 139-residue polypeptide: Cytochrome c-type biogenesis protein CcmE 2 (139 aa).

The Cytoplasmic portion of the chain corresponds to 1-9 (MASLKKSRR). Residues 10-30 (VRLILFSGVALVSATALIGYA) form a helical; Signal-anchor for type II membrane protein membrane-spanning segment. The Periplasmic portion of the chain corresponds to 31–139 (MRDGIQFFRT…ELAEMEALRD (109 aa)). 2 residues coordinate heme: His-122 and Tyr-126.

It belongs to the CcmE/CycJ family.

Its subcellular location is the cell inner membrane. Its function is as follows. Heme chaperone required for the biogenesis of c-type cytochromes. Transiently binds heme delivered by CcmC and transfers the heme to apo-cytochromes in a process facilitated by CcmF and CcmH. This Ruegeria pomeroyi (strain ATCC 700808 / DSM 15171 / DSS-3) (Silicibacter pomeroyi) protein is Cytochrome c-type biogenesis protein CcmE 2.